A 428-amino-acid chain; its full sequence is Elongation factor 1-alpha (428 aa).

The tr-type G domain maps to 5–217 (KPHVNIVFIG…DQIPEPEKPT (213 aa)). The segment at 14–21 (GHVDHGKS) is G1. 14-21 (GHVDHGKS) is a binding site for GTP. Mg(2+) is bound at residue Ser21. The segment at 68-72 (GITID) is G2. The G3 stretch occupies residues 89-92 (DAPG). Residues 89 to 93 (DAPGH) and 144 to 147 (NKMD) contribute to the GTP site. A G4 region spans residues 144–147 (NKMD). The segment at 181-183 (SAW) is G5.

This sequence belongs to the TRAFAC class translation factor GTPase superfamily. Classic translation factor GTPase family. EF-Tu/EF-1A subfamily.

It is found in the cytoplasm. The enzyme catalyses GTP + H2O = GDP + phosphate + H(+). In terms of biological role, GTP hydrolase that promotes the GTP-dependent binding of aminoacyl-tRNA to the A-site of ribosomes during protein biosynthesis. The polypeptide is Elongation factor 1-alpha (Thermococcus sibiricus (strain DSM 12597 / MM 739)).